A 2620-amino-acid polypeptide reads, in one-letter code: Highly reducing polyketide synthase tazB (2620 aa).

The tract at residues 1–22 (MPFLNGNTTHHEAHSAEPDHGN) is disordered. The region spanning 1–416 (MPFLNGNTTH…GTNAHCILDD (416 aa)) is the Ketosynthase family 3 (KS3) domain. The segment covering 9 to 22 (THHEAHSAEPDHGN) has biased composition (basic and acidic residues). Residues Cys-166, His-301, and His-340 each act as for beta-ketoacyl synthase activity in the active site. Positions 460–481 (GFNKFDEPRGSDSAGSNANGSH) are disordered. Positions 470–481 (SDSAGSNANGSH) are enriched in low complexity. The tract at residues 601 to 923 (VFTGQGAQYA…PYLATLSRKD (323 aa)) is malonyl-CoA:ACP transacylase (MAT) domain. The interval 993–1128 (HDLFGAPVPD…GEVSPDLKKS (136 aa)) is N-terminal hotdog fold. The dehydratase (DH) domain stretch occupies residues 993–1313 (HDLFGAPVPD…LAGIRLSPFK (321 aa)). In terms of domain architecture, PKS/mFAS DH spans 993 to 1318 (HDLFGAPVPD…LSPFKPESSE (326 aa)). Residue His-1025 is the Proton acceptor; for dehydratase activity of the active site. Positions 1157 to 1318 (TAPVDFTPVY…LSPFKPESSE (162 aa)) are C-terminal hotdog fold. Asp-1225 acts as the Proton donor; for dehydratase activity in catalysis. Positions 1379–1680 (GLRESREMKD…VDFEASSSIY (302 aa)) are methyltransferase (CMet) domain. The segment at 1910–2227 (GIDSLTWVTD…TGKSIGKVTL (318 aa)) is enoyl reductase (ER) domain. Residues 2251–2425 (SFILAGGLGG…HGASVNLGAV (175 aa)) form a ketoreductase (KR) domain region. Positions 2539-2620 (EAARIIHKAL…VSLSSFTKFR (82 aa)) constitute a Carrier domain. The residue at position 2576 (Ser-2576) is an O-(pantetheine 4'-phosphoryl)serine.

Its pathway is secondary metabolite biosynthesis. Functionally, highly reducing polyketide synthase; part of the gene cluster that mediates the biosynthesis of azaterrilone A and other azaphilones, a class of fungal metabolites characterized by a highly oxygenated pyrano-quinone bicyclic core and exhibiting a broad range of bioactivities. The first step of the pathway begins with the non-reducing polyketide synthase tazA that assembles one acetyl-CoA starter unit, five malonyl-CoA units, and catalyzes a series of Claisen condensations, methylation, PT-mediated cyclization, and finally releases the first hexaketide precursor through the R-domain. The tazA product then undergoes reduction on its terminal ketone and the following pyran-ring formation by yet undetermined enzyme(s). Dehydration and enoyl reduction, possibly involving the trans-enoyl reductase tazE leads to the next intermediate. TazD is predicted as an acetyltransferase and might catalyze the acetylation steps leading to the synthesis of azaterrilone A. Azaterrilone A is not the final product of the taz pathway and both the highly reducing polyketide synthase tazB and the dual enzyme tazHJ catalyze late steps of the pathway, leading to the production of the 2 final stereoisomers that contain additional polyketide modification whose structures have still to be determined. The protein is Highly reducing polyketide synthase tazB of Aspergillus terreus (strain NIH 2624 / FGSC A1156).